The sequence spans 457 residues: Multidrug resistance protein MdtK (457 aa).

The next 12 helical transmembrane spans lie at 11 to 31 (LLAL…MGFV), 53 to 73 (IWLP…PVIA), 93 to 113 (WLAG…GYII), 127 to 147 (AVGY…FQVA), 160 to 180 (GMVM…IFIY), 188 to 208 (LGGI…FIAM), 243 to 263 (LPIA…ALLV), 276 to 296 (IALN…AAVT), 314 to 334 (AART…IFTV), 350 to 370 (VVAL…SDSI), 387 to 407 (IFFI…YILA), and 418 to 438 (PAGF…LMML).

It belongs to the multi antimicrobial extrusion (MATE) (TC 2.A.66.1) family. MdtK subfamily.

The protein resides in the cell inner membrane. Its function is as follows. Multidrug efflux pump that functions probably as a Na(+)/drug antiporter. The chain is Multidrug resistance protein MdtK from Salmonella enteritidis PT4 (strain P125109).